The following is a 207-amino-acid chain: Probable GTP-binding protein EngB (207 aa).

Residues 23-203 (GAPEVCFVGR…GAHIENWISP (181 aa)) enclose the EngB-type G domain. GTP is bound by residues 31–38 (GRSNAGKS), 58–62 (GRTRL), 83–86 (DLPG), 150–153 (TKAD), and 182–184 (FSS). Positions 38 and 60 each coordinate Mg(2+).

This sequence belongs to the TRAFAC class TrmE-Era-EngA-EngB-Septin-like GTPase superfamily. EngB GTPase family. Mg(2+) serves as cofactor.

In terms of biological role, necessary for normal cell division and for the maintenance of normal septation. In Bordetella bronchiseptica (strain ATCC BAA-588 / NCTC 13252 / RB50) (Alcaligenes bronchisepticus), this protein is Probable GTP-binding protein EngB.